The sequence spans 77 residues: Sec-independent protein translocase protein TatA (77 aa).

Residues 1–21 (MGGLSIWHWLIVLLIVALVFG) traverse the membrane as a helical segment. Positions 40 to 77 (KDGMREGEAPADPQQLPRSGSVNVDAKDATRSSDSNKA) are disordered. Basic and acidic residues predominate over residues 64–77 (DAKDATRSSDSNKA).

The protein belongs to the TatA/E family. The Tat system comprises two distinct complexes: a TatABC complex, containing multiple copies of TatA, TatB and TatC subunits, and a separate TatA complex, containing only TatA subunits. Substrates initially bind to the TatABC complex, which probably triggers association of the separate TatA complex to form the active translocon.

It localises to the cell inner membrane. Functionally, part of the twin-arginine translocation (Tat) system that transports large folded proteins containing a characteristic twin-arginine motif in their signal peptide across membranes. TatA could form the protein-conducting channel of the Tat system. The protein is Sec-independent protein translocase protein TatA of Burkholderia thailandensis (strain ATCC 700388 / DSM 13276 / CCUG 48851 / CIP 106301 / E264).